Consider the following 106-residue polypeptide: MSKKNDWLDFDQLAEDKVRDALKPPSMYKVMLMNDDYTPMEFVIDVLQKFFSYDVERATQLMLTVHYRGKAICGIFTAEVAETKVAMVNEYARENEHPLLCTLEKA.

This sequence belongs to the ClpS family. Binds to the N-terminal domain of the chaperone ClpA.

In terms of biological role, involved in the modulation of the specificity of the ClpAP-mediated ATP-dependent protein degradation. This is ATP-dependent Clp protease adapter protein ClpS from Enterobacter sp. (strain 638).